A 251-amino-acid polypeptide reads, in one-letter code: MDHAIYTAMGAASQTLNQQAVTASNLANASTPGFRAQLNALRAVPVDGLSLATRTLVTASTPGADMTPGQLDYTSRPLDVALQQDGWLVVQAADGAEGYTRNGNIQVGPTGQLTIQGHPVIGEGGPITVPEGSEITIAADGTISALNPGDPPNTVAPVGRLKLVKAEGNEVQRSDDGLFRLTAEAQAERGAVLAADPSIRIMSGVLEGSNVKPVEAMTDMIANARRFEMQMKVITSVDENEGRANQLLSMS.

This sequence belongs to the flagella basal body rod proteins family. As to quaternary structure, the basal body constitutes a major portion of the flagellar organelle and consists of five rings (E,L,P,S, and M) mounted on a central rod. The rod consists of about 26 subunits of FlgG in the distal portion, and FlgB, FlgC and FlgF are thought to build up the proximal portion of the rod with about 6 subunits each.

It localises to the bacterial flagellum basal body. This chain is Flagellar basal-body rod protein FlgF (flgF), found in Salmonella typhimurium (strain LT2 / SGSC1412 / ATCC 700720).